We begin with the raw amino-acid sequence, 143 residues long: FAD synthase (143 aa).

ATP contacts are provided by residues 9 to 10 (TF), 14 to 17 (HPGH), and aspartate 92.

It belongs to the archaeal FAD synthase family. In terms of assembly, homodimer. A divalent metal cation is required as a cofactor.

It catalyses the reaction FMN + ATP + H(+) = FAD + diphosphate. Its pathway is cofactor biosynthesis; FAD biosynthesis; FAD from FMN: step 1/1. Its function is as follows. Catalyzes the transfer of the AMP portion of ATP to flavin mononucleotide (FMN) to produce flavin adenine dinucleotide (FAD) coenzyme. The sequence is that of FAD synthase from Methanococcoides burtonii (strain DSM 6242 / NBRC 107633 / OCM 468 / ACE-M).